The sequence spans 414 residues: Tyrosine--tRNA ligase (414 aa).

Tyr-40 serves as a coordination point for L-tyrosine. Residues 45–54 carry the 'HIGH' region motif; sequence ATAASLHVGH. L-tyrosine-binding residues include Tyr-175 and Gln-179. The 'KMSKS' region signature appears at 235-239; sequence KMGKS. Residue Lys-238 coordinates ATP. The region spanning 349–414 is the S4 RNA-binding domain; sequence LTVVQLLAQT…KKKHRMVQLG (66 aa).

This sequence belongs to the class-I aminoacyl-tRNA synthetase family. TyrS type 1 subfamily. In terms of assembly, homodimer.

The protein resides in the cytoplasm. It catalyses the reaction tRNA(Tyr) + L-tyrosine + ATP = L-tyrosyl-tRNA(Tyr) + AMP + diphosphate + H(+). In terms of biological role, catalyzes the attachment of tyrosine to tRNA(Tyr) in a two-step reaction: tyrosine is first activated by ATP to form Tyr-AMP and then transferred to the acceptor end of tRNA(Tyr). This chain is Tyrosine--tRNA ligase, found in Paracoccus denitrificans (strain Pd 1222).